A 469-amino-acid polypeptide reads, in one-letter code: tRNA-2-methylthio-N(6)-dimethylallyladenosine synthase (469 aa).

The 121-residue stretch at 22 to 142 (RKVFIKTYGC…LPEALRRAKE (121 aa)) folds into the MTTase N-terminal domain. [4Fe-4S] cluster-binding residues include cysteine 31, cysteine 67, cysteine 105, cysteine 183, cysteine 187, and cysteine 190. The 233-residue stretch at 169–401 (RARGVTAFLT…QALLLKQQQE (233 aa)) folds into the Radical SAM core domain. Residues 404-466 (ESCIGKEIDL…NNSLFAERAE (63 aa)) enclose the TRAM domain.

This sequence belongs to the methylthiotransferase family. MiaB subfamily. In terms of assembly, monomer. The cofactor is [4Fe-4S] cluster.

It localises to the cytoplasm. The catalysed reaction is N(6)-dimethylallyladenosine(37) in tRNA + (sulfur carrier)-SH + AH2 + 2 S-adenosyl-L-methionine = 2-methylsulfanyl-N(6)-dimethylallyladenosine(37) in tRNA + (sulfur carrier)-H + 5'-deoxyadenosine + L-methionine + A + S-adenosyl-L-homocysteine + 2 H(+). In terms of biological role, catalyzes the methylthiolation of N6-(dimethylallyl)adenosine (i(6)A), leading to the formation of 2-methylthio-N6-(dimethylallyl)adenosine (ms(2)i(6)A) at position 37 in tRNAs that read codons beginning with uridine. This chain is tRNA-2-methylthio-N(6)-dimethylallyladenosine synthase, found in Rhizobium leguminosarum bv. trifolii (strain WSM2304).